The sequence spans 150 residues: Large ribosomal subunit protein bL9 (150 aa).

This sequence belongs to the bacterial ribosomal protein bL9 family.

Binds to the 23S rRNA. In Paraburkholderia phytofirmans (strain DSM 17436 / LMG 22146 / PsJN) (Burkholderia phytofirmans), this protein is Large ribosomal subunit protein bL9.